Reading from the N-terminus, the 356-residue chain is D-alanine--D-alanine ligase (356 aa).

One can recognise an ATP-grasp domain in the interval 134–339 (KQLFEHRGLP…YPELITKLIE (206 aa)). 167–222 (NDKLNYPVFVKPANLGSSVGISKCNNEAELKEGIKEAFQFDRKLVIEQGVNAREIE) contributes to the ATP binding site. Mg(2+) is bound by residues Asp293, Glu306, and Asn308.

Belongs to the D-alanine--D-alanine ligase family. The cofactor is Mg(2+). Requires Mn(2+) as cofactor.

It localises to the cytoplasm. It catalyses the reaction 2 D-alanine + ATP = D-alanyl-D-alanine + ADP + phosphate + H(+). It participates in cell wall biogenesis; peptidoglycan biosynthesis. Cell wall formation. The chain is D-alanine--D-alanine ligase from Staphylococcus aureus (strain MSSA476).